Consider the following 470-residue polypeptide: Bifunctional protein ArgHA (470 aa).

The tract at residues 1-470 is argininosuccinate lyase; that stretch reads MALWGGRFSQ…TSGISIRAAR (470 aa).

It in the N-terminal section; belongs to the lyase 1 family. Argininosuccinate lyase subfamily. This sequence in the C-terminal section; belongs to the acetyltransferase family. ArgA subfamily.

The protein localises to the cytoplasm. The enzyme catalyses 2-(N(omega)-L-arginino)succinate = fumarate + L-arginine. It carries out the reaction L-glutamate + acetyl-CoA = N-acetyl-L-glutamate + CoA + H(+). The protein operates within amino-acid biosynthesis; L-arginine biosynthesis; N(2)-acetyl-L-ornithine from L-glutamate: step 1/4. Its pathway is amino-acid biosynthesis; L-arginine biosynthesis; L-arginine from L-ornithine and carbamoyl phosphate: step 3/3. The chain is Bifunctional protein ArgHA (argHA) from Moritella profunda.